The following is an 86-amino-acid chain: Small ribosomal subunit protein bS18 (86 aa).

The protein belongs to the bacterial ribosomal protein bS18 family. Part of the 30S ribosomal subunit. Forms a tight heterodimer with protein bS6.

Binds as a heterodimer with protein bS6 to the central domain of the 16S rRNA, where it helps stabilize the platform of the 30S subunit. This is Small ribosomal subunit protein bS18 from Campylobacter curvus (strain 525.92).